The primary structure comprises 503 residues: MKLLEQIEKWAIETPDQTAFVWRDAKITYKQLKEDSDALAHWISSEYPDDRSPIMVYGHMQPEMIINFLGCVKAGHAYIPVDLSIPADRVQRIAENSGAKLLLSAAVTVTDLPVRIVSEDNLKDIFFTHKGNTPNPEHAVKGDENFYIIYTSGSTGNPKGVQITYNCLVSFTQWAVEDFNLQTGQVFLNQAPFSFDLSVMDIYPSLVTGGTLWAIDKDMIARPKDLFASLEQSDIQVWTSTPSFAEMCLMEASFSESMLPNMKTFLFCGEVLPNEVARKLIERFPKATIMNTYGPTEATVAVTGIHVTEEVLDQYKSLPVGYCKSDCRLLIMKEDGTIAPDGEKGEIVIVGPSVSVGYLGSPELTEKAFTMIDGERAYKTGDAGYVENGLLFYNGRLDFQIKLHGYRMELEEIEHHLRACSYVEGAVIVPIKKGEKYDYLLAVVVPGEHSFEKEFKLTSAIKKELNERLPNYMIPRKFMYQSSIPMTPNGKVDRKKLLSEVTA.

151 to 152 is a binding site for ATP; it reads TS. Position 196 (D196) interacts with D-alanine. 291 to 296 is a binding site for ATP; the sequence is NTYGPT. V300 provides a ligand contact to D-alanine. ATP is bound by residues D382, 393–396, and K491; that span reads YNGR. Residue K491 participates in D-alanine binding.

The protein belongs to the ATP-dependent AMP-binding enzyme family. DltA subfamily.

The protein localises to the cytoplasm. The enzyme catalyses holo-[D-alanyl-carrier protein] + D-alanine + ATP = D-alanyl-[D-alanyl-carrier protein] + AMP + diphosphate. It functions in the pathway cell wall biogenesis; lipoteichoic acid biosynthesis. In terms of biological role, catalyzes the first step in the D-alanylation of lipoteichoic acid (LTA), the activation of D-alanine and its transfer onto the D-alanyl carrier protein (Dcp) DltC. In an ATP-dependent two-step reaction, forms a high energy D-alanyl-AMP intermediate, followed by transfer of the D-alanyl residue as a thiol ester to the phosphopantheinyl prosthetic group of the Dcp. D-alanylation of LTA plays an important role in modulating the properties of the cell wall in Gram-positive bacteria, influencing the net charge of the cell wall. The polypeptide is D-alanine--D-alanyl carrier protein ligase (Bacillus anthracis (strain A0248)).